Consider the following 344-residue polypeptide: 4-dimethylallyltryptophan N-methyltransferase easF (344 aa).

This sequence belongs to the methyltransferase superfamily. Homodimer.

The catalysed reaction is 4-(3-methylbut-2-enyl)-L-tryptophan + S-adenosyl-L-methionine = 4-(3-methylbut-2-enyl)-L-abrine + S-adenosyl-L-homocysteine + H(+). It participates in alkaloid biosynthesis; ergot alkaloid biosynthesis. Functionally, 4-dimethylallyltryptophan N-methyltransferase; part of the gene cluster that mediates the biosynthesis of fungal ergot alkaloid. DmaW catalyzes the first step of ergot alkaloid biosynthesis by condensing dimethylallyl diphosphate (DMAP) and tryptophan to form 4-dimethylallyl-L-tryptophan. The second step is catalyzed by the methyltransferase easF that methylates 4-dimethylallyl-L-tryptophan in the presence of S-adenosyl-L-methionine, resulting in the formation of 4-dimethylallyl-L-abrine. The catalase easC and the FAD-dependent oxidoreductase easE then transform 4-dimethylallyl-L-abrine to chanoclavine-I which is further oxidized by easD in the presence of NAD(+), resulting in the formation of chanoclavine-I aldehyde. Agroclavine dehydrogenase easG then mediates the conversion of chanoclavine-I aldehyde to agroclavine via a non-enzymatic adduct reaction: the substrate is an iminium intermediate that is formed spontaneously from chanoclavine-I aldehyde in the presence of glutathione. The presence of easA is not required to complete this reaction. Further conversion of agroclavine to paspalic acid is a two-step process involving oxidation of agroclavine to elymoclavine and of elymoclavine to paspalic acid, the second step being performed by the elymoclavine oxidase cloA. Paspalic acid is then further converted to D-lysergic acid. Ergopeptines are assembled from D-lysergic acid and three different amino acids by the D-lysergyl-peptide-synthetases composed each of a monomudular and a trimodular nonribosomal peptide synthetase subunit. LpsB and lpsC encode the monomodular subunits responsible for D-lysergic acid activation and incorporation into the ergopeptine backbone. LpsA1 and A2 subunits encode the trimodular nonribosomal peptide synthetase assembling the tripeptide portion of ergopeptines. LpsA1 is responsible for formation of the major ergopeptine, ergotamine, and lpsA2 for alpha-ergocryptine, the minor ergopeptine of the total alkaloid mixture elaborated by C.purpurea. D-lysergyl-tripeptides are assembled by the nonribosomal peptide synthetases and released as N-(D-lysergyl-aminoacyl)-lactams. Cyclolization of the D-lysergyl-tripeptides is performed by the Fe(2+)/2-ketoglutarate-dependent dioxygenase easH which introduces a hydroxyl group into N-(D-lysergyl-aminoacyl)-lactam at alpha-C of the aminoacyl residue followed by spontaneous condensation with the terminal lactam carbonyl group. This chain is 4-dimethylallyltryptophan N-methyltransferase easF, found in Claviceps purpurea (Ergot fungus).